The sequence spans 65 residues: UPF0291 protein BBR47_33060 (65 aa).

This sequence belongs to the UPF0291 family.

Its subcellular location is the cytoplasm. The chain is UPF0291 protein BBR47_33060 from Brevibacillus brevis (strain 47 / JCM 6285 / NBRC 100599).